A 118-amino-acid polypeptide reads, in one-letter code: Small ribosomal subunit protein uS13 (118 aa).

Residues 94 to 118 (GLPVRGQRTKTNARTRKGPCKPIKK) form a disordered region.

Belongs to the universal ribosomal protein uS13 family. As to quaternary structure, part of the 30S ribosomal subunit. Forms a loose heterodimer with protein S19. Forms two bridges to the 50S subunit in the 70S ribosome.

Functionally, located at the top of the head of the 30S subunit, it contacts several helices of the 16S rRNA. In the 70S ribosome it contacts the 23S rRNA (bridge B1a) and protein L5 of the 50S subunit (bridge B1b), connecting the 2 subunits; these bridges are implicated in subunit movement. Contacts the tRNAs in the A and P-sites. The sequence is that of Small ribosomal subunit protein uS13 from Salmonella typhi.